The chain runs to 200 residues: MFAELAPYLSNPRQTLAQILNFALVLSTAFMGWKALSVYTNSSSPIVVVLSGSMEPAFQRGDLLFLWNNSPRAEVGEIVVYNVQGKDIPIVHRVIKAFGTGDGGKKSQRRLEKEADKRSGPGLSSPISHQMLTKGDNNIADDTELYAQGQDYLDRKLDIVGSVRGYIPAVGYVTIMLAENPWMKTVLLGIMGVMVMLQRE.

The Cytoplasmic portion of the chain corresponds to 1–15 (MFAELAPYLSNPRQT). Residues 16–33 (LAQILNFALVLSTAFMGW) traverse the membrane as a helical; Signal-anchor for type II membrane protein segment. Residues 34-200 (KALSVYTNSS…MGVMVMLQRE (167 aa)) lie on the Lumenal side of the membrane. An N-linked (GlcNAc...) asparagine glycan is attached at Asn-41. Catalysis depends on charge relay system residues Ser-53 and His-92. The tract at residues 101 to 131 (GDGGKKSQRRLEKEADKRSGPGLSSPISHQM) is disordered. Residues 103-119 (GGKKSQRRLEKEADKRS) show a composition bias toward basic and acidic residues. Asp-142 (charge relay system) is an active-site residue. A C-terminal short (CTS) helix region spans residues 186–197 (VLLGIMGVMVML).

The protein belongs to the peptidase S26B family. Component of the signal peptidase complex (SPC) composed of a catalytic subunit SEC11 and three accessory subunits SPC1, SPC2 and SPC3. The complex induces a local thinning of the ER membrane which is used to measure the length of the signal peptide (SP) h-region of protein substrates. This ensures the selectivity of the complex towards h-regions shorter than 18-20 amino acids. SPC associates with the translocon complex.

The protein localises to the endoplasmic reticulum membrane. It catalyses the reaction Cleavage of hydrophobic, N-terminal signal or leader sequences from secreted and periplasmic proteins.. Functionally, catalytic component of the signal peptidase complex (SPC) which catalyzes the cleavage of N-terminal signal sequences from nascent proteins as they are translocated into the lumen of the endoplasmic reticulum. Specifically cleaves N-terminal signal peptides that contain a hydrophobic alpha-helix (h-region) shorter than 18-20 amino acids. The sequence is that of Signal peptidase complex catalytic subunit SEC11 (SEC11) from Arthroderma gypseum (strain ATCC MYA-4604 / CBS 118893) (Microsporum gypseum).